Here is a 245-residue protein sequence, read N- to C-terminus: RNA polymerase sigma factor SigI5 (245 aa).

Positions 60-73 match the Polymerase core binding motif; the sequence is DEYSIGLMAFNEAI. The H-T-H motif DNA-binding region spans 202–221; the sequence is MKELSKIIDVHPKTVERNRA.

The protein belongs to the sigma-70 factor family. SigI subfamily. Interacts with RsgI5.

Its subcellular location is the cytoplasm. With respect to regulation, negatively regulated by the anti-sigma-I factor RsgI5. Binding of the polysaccharide substrate to RsgI5 may lead to the release and activation of SigI5. Sigma factors are initiation factors that promote the attachment of RNA polymerase to specific initiation sites and are then released. This sigma factor is involved in regulation of cellulosomal genes via an external polysaccharide-sensing mechanism. The sequence is that of RNA polymerase sigma factor SigI5 from Acetivibrio thermocellus (strain ATCC 27405 / DSM 1237 / JCM 9322 / NBRC 103400 / NCIMB 10682 / NRRL B-4536 / VPI 7372) (Clostridium thermocellum).